Consider the following 202-residue polypeptide: Small ribosomal subunit protein uS4c (202 aa).

The 76-residue stretch at 90 to 165 (MRLDNILFRL…SQKYKIPNHL (76 aa)) folds into the S4 RNA-binding domain.

This sequence belongs to the universal ribosomal protein uS4 family. In terms of assembly, part of the 30S ribosomal subunit. Contacts protein S5. The interaction surface between S4 and S5 is involved in control of translational fidelity.

It localises to the plastid. The protein localises to the chloroplast. One of the primary rRNA binding proteins, it binds directly to 16S rRNA where it nucleates assembly of the body of the 30S subunit. In terms of biological role, with S5 and S12 plays an important role in translational accuracy. The polypeptide is Small ribosomal subunit protein uS4c (rps4) (Diphyscium foliosum (Nut-moss)).